A 942-amino-acid polypeptide reads, in one-letter code: Netrin receptor UNC5B-b (942 aa).

Positions 1 to 30 (MYLSRIPGGAALAALLVALLLCCNFPPSIA) are cleaved as a signal peptide. Over 31–380 (GIEYSDVLPD…LESTGDVALY (350 aa)) the chain is Extracellular. The Ig-like domain maps to 51–148 (PHFLLEPEDA…AGTTKSKRSY (98 aa)). Disulfide bonds link cysteine 72-cysteine 133, cysteine 84-cysteine 131, cysteine 177-cysteine 228, cysteine 261-cysteine 298, cysteine 265-cysteine 302, cysteine 276-cysteine 288, cysteine 317-cysteine 351, cysteine 321-cysteine 356, and cysteine 329-cysteine 341. In terms of domain architecture, Ig-like C2-type spans 150–245 (RIAYLRKNFD…KRRSTTATVI (96 aa)). An N-linked (GlcNAc...) asparagine glycan is attached at asparagine 225. TSP type-1 domains are found at residues 249-303 (NGGW…TMCP) and 305-357 (DGGW…GLCM). The N-linked (GlcNAc...) asparagine glycan is linked to asparagine 350. The chain crosses the membrane as a helical span at residues 381 to 401 (AGLVVAIFIIIILLMAVGIVV). At 402–942 (YRRNCREFDT…MLVMATDGDC (541 aa)) the chain is on the cytoplasmic side. The 144-residue stretch at 541 to 684 (NSVTGTFGSL…LGTYAFVGES (144 aa)) folds into the ZU5 domain. Residues 687-835 (RSAIKRLQLA…LEENVKSFDP (149 aa)) are UPA domain. Residues 863–940 (ICNSLDAPNS…EMMLVMATDG (78 aa)) enclose the Death domain.

It belongs to the unc-5 family. As to quaternary structure, interacts (via extracellular domain) with flrt3 (via extracellular domain). Interacts with rnd1.

It is found in the cell membrane. Its function is as follows. Plays a role in cell-cell adhesion during embryonic development. Receptor for netrin required for axon guidance. Mediates axon repulsion of neuronal growth cones in the developing nervous system upon ligand binding. This Xenopus laevis (African clawed frog) protein is Netrin receptor UNC5B-b.